We begin with the raw amino-acid sequence, 149 residues long: Putative oligosaccharyltransferase complex subunit CG9662 (149 aa).

Over 1-32 (MIETLYNLPFHILVPPNIKVRRFSIPMPSPMA) the chain is Cytoplasmic. Residues 33 to 53 (VFSVILFSYFLVTGGIIYDVI) form a helical membrane-spanning segment. Residues 54 to 83 (VEPPSLGATVDEHGHSRPVAFMPYRVNGQY) are Extracellular-facing. Residues 84–104 (IMEGLASSFLFTVGGLGFIIM) traverse the membrane as a helical segment. Residues 105-117 (DQTHTPGKTNLNR) lie on the Cytoplasmic side of the membrane. Residues 118–138 (LLLTAMGFIFILVSFFTTWLF) form a helical membrane-spanning segment. At 139 to 149 (MRMKLPSYLQP) the chain is on the extracellular side.

Belongs to the OSTC family. As to quaternary structure, component of the oligosaccharyltransferase (OST) complex.

It localises to the membrane. Subunit of the oligosaccharyl transferase (OST) complex that catalyzes the initial transfer of a defined glycan (Glc(3)Man(9)GlcNAc(2) in eukaryotes) from the lipid carrier dolichol-pyrophosphate to an asparagine residue within an Asn-X-Ser/Thr consensus motif in nascent polypeptide chains, the first step in protein N-glycosylation. N-glycosylation occurs cotranslationally and the complex associates with the Sec61 complex at the channel-forming translocon complex that mediates protein translocation across the endoplasmic reticulum (ER). All subunits are required for a maximal enzyme activity. The protein is Putative oligosaccharyltransferase complex subunit CG9662 of Drosophila melanogaster (Fruit fly).